The following is a 234-amino-acid chain: Large ribosomal subunit protein uL3 (234 aa).

Residues 137–156 (AGHGVERKHRSPGSVGGCAT) form a disordered region.

Belongs to the universal ribosomal protein uL3 family. Part of the 50S ribosomal subunit. Forms a cluster with proteins L14 and L19.

One of the primary rRNA binding proteins, it binds directly near the 3'-end of the 23S rRNA, where it nucleates assembly of the 50S subunit. This Frankia alni (strain DSM 45986 / CECT 9034 / ACN14a) protein is Large ribosomal subunit protein uL3.